A 235-amino-acid polypeptide reads, in one-letter code: 2-C-methyl-D-erythritol 4-phosphate cytidylyltransferase (235 aa).

The protein belongs to the IspD/TarI cytidylyltransferase family. IspD subfamily.

It catalyses the reaction 2-C-methyl-D-erythritol 4-phosphate + CTP + H(+) = 4-CDP-2-C-methyl-D-erythritol + diphosphate. It functions in the pathway isoprenoid biosynthesis; isopentenyl diphosphate biosynthesis via DXP pathway; isopentenyl diphosphate from 1-deoxy-D-xylulose 5-phosphate: step 2/6. In terms of biological role, catalyzes the formation of 4-diphosphocytidyl-2-C-methyl-D-erythritol from CTP and 2-C-methyl-D-erythritol 4-phosphate (MEP). The chain is 2-C-methyl-D-erythritol 4-phosphate cytidylyltransferase from Pseudomonas entomophila (strain L48).